Reading from the N-terminus, the 536-residue chain is 2-isopropylmalate synthase (536 aa).

In terms of domain architecture, Pyruvate carboxyltransferase spans valine 8–threonine 273. Aspartate 17, histidine 208, histidine 210, and asparagine 244 together coordinate Mn(2+). The interval lysine 408 to leucine 536 is regulatory domain.

Belongs to the alpha-IPM synthase/homocitrate synthase family. LeuA type 1 subfamily. Homodimer. Mn(2+) serves as cofactor.

Its subcellular location is the cytoplasm. The enzyme catalyses 3-methyl-2-oxobutanoate + acetyl-CoA + H2O = (2S)-2-isopropylmalate + CoA + H(+). It functions in the pathway amino-acid biosynthesis; L-leucine biosynthesis; L-leucine from 3-methyl-2-oxobutanoate: step 1/4. In terms of biological role, catalyzes the condensation of the acetyl group of acetyl-CoA with 3-methyl-2-oxobutanoate (2-ketoisovalerate) to form 3-carboxy-3-hydroxy-4-methylpentanoate (2-isopropylmalate). The sequence is that of 2-isopropylmalate synthase from Prochlorococcus marinus (strain SARG / CCMP1375 / SS120).